Reading from the N-terminus, the 236-residue chain is Small ribosomal subunit protein uS2c (236 aa).

It belongs to the universal ribosomal protein uS2 family.

Its subcellular location is the plastid. The protein localises to the chloroplast. The sequence is that of Small ribosomal subunit protein uS2c (rps2) from Acorus calamus var. americanus (American sweet flag).